We begin with the raw amino-acid sequence, 396 residues long: Phosphoglycerate kinase (396 aa).

Substrate is bound by residues 23–25 (DFN), R38, 61–64 (HMGK), R122, and R155. ATP contacts are provided by residues K206, G296, E327, and 353 to 356 (GGDS).

This sequence belongs to the phosphoglycerate kinase family. Monomer.

Its subcellular location is the cytoplasm. The catalysed reaction is (2R)-3-phosphoglycerate + ATP = (2R)-3-phospho-glyceroyl phosphate + ADP. It functions in the pathway carbohydrate degradation; glycolysis; pyruvate from D-glyceraldehyde 3-phosphate: step 2/5. The chain is Phosphoglycerate kinase from Clostridium botulinum (strain Alaska E43 / Type E3).